A 368-amino-acid polypeptide reads, in one-letter code: D-alanine--D-alanine ligase (368 aa).

One can recognise an ATP-grasp domain in the interval 141 to 350; sequence KMIWDYSGLP…YNELIMHLIE (210 aa). 176–231 lines the ATP pocket; it reads EKDLEYPLFIKPCRAGSSVGAGMVKNRNELLEQAEESFLWDNKILVEACIEAREVE. Mg(2+) is bound by residues D303, E317, and N319.

This sequence belongs to the D-alanine--D-alanine ligase family. Mg(2+) is required as a cofactor. The cofactor is Mn(2+).

It is found in the cytoplasm. The catalysed reaction is 2 D-alanine + ATP = D-alanyl-D-alanine + ADP + phosphate + H(+). It participates in cell wall biogenesis; peptidoglycan biosynthesis. Its function is as follows. Cell wall formation. In Treponema denticola (strain ATCC 35405 / DSM 14222 / CIP 103919 / JCM 8153 / KCTC 15104), this protein is D-alanine--D-alanine ligase.